Here is a 501-residue protein sequence, read N- to C-terminus: Acetylcholine receptor subunit beta (501 aa).

An N-terminal signal peptide occupies residues 1–23; sequence MALGALLLLLGVLGTPLAPGARG. The Extracellular portion of the chain corresponds to 24–244; the sequence is SEAEGQLIKK…VIFYLIIRRK (221 aa). Residues cysteine 151 and cysteine 165 are joined by a disulfide bond. N-linked (GlcNAc...) asparagine glycosylation is present at asparagine 164. Transmembrane regions (helical) follow at residues 245-269, 277-295, and 311-332; these read PLFY…VFYL, MGLS…LLLA, and YLMF…VLNL. Residues 333–469 lie on the Cytoplasmic side of the membrane; it reads HHRSPHTHQM…WQFVAMVVDR (137 aa). Residues 362-382 form a disordered region; it reads RPKPERDQLPEPHHSLSPRSG. Basic and acidic residues predominate over residues 363–375; that stretch reads PKPERDQLPEPHH. Tyrosine 390 is modified (phosphotyrosine; by Tyr-kinases). The helical transmembrane segment at 470 to 488 threads the bilayer; the sequence is LFLWTFIVFTSVGTLVIFL.

Belongs to the ligand-gated ion channel (TC 1.A.9) family. Acetylcholine receptor (TC 1.A.9.1) subfamily. Beta-1/CHRNB1 sub-subfamily. In terms of assembly, pentamer of two alpha chains, and one each of the beta, delta, and gamma (in immature muscle) or epsilon (in mature muscle) chains. The muscle heteropentamer composed of alpha-1, beta-1, delta, epsilon subunits interacts with the alpha-conotoxin ImII.

It is found in the postsynaptic cell membrane. The protein resides in the cell membrane. The catalysed reaction is K(+)(in) = K(+)(out). It carries out the reaction Na(+)(in) = Na(+)(out). Its function is as follows. After binding acetylcholine, the AChR responds by an extensive change in conformation that affects all subunits and leads to opening of an ion-conducting channel across the plasma membrane. The polypeptide is Acetylcholine receptor subunit beta (Chrnb1) (Mus musculus (Mouse)).